The following is a 345-amino-acid chain: MREPAFWHRPHAWQSLLLSPLSVLYGAIAAHRMAQSGLDAGVPVICVGNFHVGGAGKTPTVLALSALLRELGEHPVVLSRGYGGRLAGPVAVDPAIHAAADVGDEPLMMAAHVPVVVSRHRAEGVGLAKTQGASVILMDDGFQNPSLTKDLALIVIDGARGLGNGRVFPAGPLRAPLPPQLARTDALIVVGSGAAGEAVAARVTAAGKPVFRAHLQPDPEVVAALAGRPLLAFAGIGDPQRFFRTLRASGLDVVGERAFPDHHPFSTDEIAALADKARHQGATLVTTQKDLARLRGHRILGRSDPVITAFPVTLQFSDPTALRSLVAHRLASARQRQPFALSAPG.

51–58 serves as a coordination point for ATP; that stretch reads HVGGAGKT.

It belongs to the LpxK family.

It catalyses the reaction a lipid A disaccharide + ATP = a lipid IVA + ADP + H(+). The protein operates within glycolipid biosynthesis; lipid IV(A) biosynthesis; lipid IV(A) from (3R)-3-hydroxytetradecanoyl-[acyl-carrier-protein] and UDP-N-acetyl-alpha-D-glucosamine: step 6/6. Functionally, transfers the gamma-phosphate of ATP to the 4'-position of a tetraacyldisaccharide 1-phosphate intermediate (termed DS-1-P) to form tetraacyldisaccharide 1,4'-bis-phosphate (lipid IVA). The sequence is that of Tetraacyldisaccharide 4'-kinase from Bradyrhizobium sp. (strain BTAi1 / ATCC BAA-1182).